The chain runs to 279 residues: Probable endonuclease 4 (279 aa).

His66, His106, Glu142, Asp175, His178, His212, Asp225, His227, and Glu257 together coordinate Zn(2+).

This sequence belongs to the AP endonuclease 2 family. Zn(2+) is required as a cofactor.

It carries out the reaction Endonucleolytic cleavage to 5'-phosphooligonucleotide end-products.. In terms of biological role, endonuclease IV plays a role in DNA repair. It cleaves phosphodiester bonds at apurinic or apyrimidinic (AP) sites, generating a 3'-hydroxyl group and a 5'-terminal sugar phosphate. This chain is Probable endonuclease 4, found in Moorella thermoacetica (strain ATCC 39073 / JCM 9320).